The sequence spans 422 residues: Metallocarboxypeptidase A (422 aa).

The first 17 residues, 1-17 (MRSVLSLALLAANVVTA), serve as a signal peptide directing secretion. Positions 18 to 112 (AVVSPFDYSG…FEAYSAGYAP (95 aa)) are cleaved as a propeptide — activation peptide. One can recognise a Peptidase M14 domain in the interval 119 to 419 (SYHSYQDHIS…AGTVAMLKAV (301 aa)). Zn(2+)-binding residues include histidine 179 and glutamate 182. Residues 179–182 (HARE), arginine 237, and 254–255 (NR) each bind substrate. A disulfide bridge links cysteine 248 with cysteine 271. Histidine 309 lines the Zn(2+) pocket. Position 310-311 (310-311 (SY)) interacts with substrate. Glutamate 385 serves as the catalytic Proton donor/acceptor.

The protein belongs to the peptidase M14 family. It depends on Zn(2+) as a cofactor.

The protein localises to the secreted. In terms of biological role, extracellular metalloprotease that contributes to pathogenicity. This chain is Metallocarboxypeptidase A (MCPA), found in Trichophyton tonsurans (Scalp ringworm fungus).